Consider the following 378-residue polypeptide: Ribosomal RNA large subunit methyltransferase G (378 aa).

Belongs to the methyltransferase superfamily. RlmG family.

Its subcellular location is the cytoplasm. It catalyses the reaction guanosine(1835) in 23S rRNA + S-adenosyl-L-methionine = N(2)-methylguanosine(1835) in 23S rRNA + S-adenosyl-L-homocysteine + H(+). Its function is as follows. Specifically methylates the guanine in position 1835 (m2G1835) of 23S rRNA. This is Ribosomal RNA large subunit methyltransferase G from Escherichia coli O1:K1 / APEC.